We begin with the raw amino-acid sequence, 345 residues long: Phosphoribosylformylglycinamidine cyclo-ligase (345 aa).

It belongs to the AIR synthase family.

The protein resides in the cytoplasm. The catalysed reaction is 2-formamido-N(1)-(5-O-phospho-beta-D-ribosyl)acetamidine + ATP = 5-amino-1-(5-phospho-beta-D-ribosyl)imidazole + ADP + phosphate + H(+). It participates in purine metabolism; IMP biosynthesis via de novo pathway; 5-amino-1-(5-phospho-D-ribosyl)imidazole from N(2)-formyl-N(1)-(5-phospho-D-ribosyl)glycinamide: step 2/2. This chain is Phosphoribosylformylglycinamidine cyclo-ligase, found in Aeromonas salmonicida (strain A449).